We begin with the raw amino-acid sequence, 515 residues long: Fatty acyl-CoA reductase 1 (515 aa).

The Cytoplasmic segment spans residues 1 to 465 (MLSIPEFYQG…ARKHLNKLRN (465 aa)). Residues 466 to 484 (IRYGFNTILVVLIWRVFIA) traverse the membrane as a helical segment. Topologically, residues 485–515 (RSQMARNIWYFVVSMCFKFLSYFRASSTMRY) are peroxisomal.

This sequence belongs to the fatty acyl-CoA reductase family.

The protein localises to the peroxisome membrane. The catalysed reaction is a long-chain fatty acyl-CoA + 2 NADPH + 2 H(+) = a long-chain primary fatty alcohol + 2 NADP(+) + CoA. It carries out the reaction hexadecanoyl-CoA + 2 NADPH + 2 H(+) = hexadecan-1-ol + 2 NADP(+) + CoA. It catalyses the reaction octadecanoyl-CoA + 2 NADPH + 2 H(+) = octadecan-1-ol + 2 NADP(+) + CoA. The enzyme catalyses (9Z)-octadecenoyl-CoA + 2 NADPH + 2 H(+) = (9Z)-octadecen-1-ol + 2 NADP(+) + CoA. The catalysed reaction is (9Z,12Z)-octadecadienoyl-CoA + 2 NADPH + 2 H(+) = (9Z,12Z)-octadecadien-1-ol + 2 NADP(+) + CoA. It carries out the reaction eicosanoyl-CoA + 2 NADPH + 2 H(+) = eicosan-1-ol + 2 NADP(+) + CoA. It catalyses the reaction 16-methylheptadecanoyl-CoA + 2 NADPH + 2 H(+) = 16-methylheptadecan-1-ol + 2 NADP(+) + CoA. The enzyme catalyses 18-methylnonadecanoyl-CoA + 2 NADPH + 2 H(+) = 18-methylnonadecan-1-ol + 2 NADP(+) + CoA. Functionally, catalyzes the reduction of saturated and unsaturated C16 or C18 fatty acyl-CoA to fatty alcohols. It plays an essential role in the production of ether lipids/plasmalogens which synthesis requires fatty alcohols. In parallel, it is also required for wax monoesters production since fatty alcohols also constitute a substrate for their synthesis. This is Fatty acyl-CoA reductase 1 (far1) from Xenopus laevis (African clawed frog).